A 264-amino-acid polypeptide reads, in one-letter code: Thymidylate synthase (264 aa).

Arg21 is a dUMP binding site. (6R)-5,10-methylene-5,6,7,8-tetrahydrofolate is bound at residue His51. A dUMP-binding site is contributed by Arg126–Arg127. Cys146 functions as the Nucleophile in the catalytic mechanism. DUMP contacts are provided by residues Arg166–Asp169, Asn177, and His207–Tyr209. Asp169 provides a ligand contact to (6R)-5,10-methylene-5,6,7,8-tetrahydrofolate. Ala263 is a (6R)-5,10-methylene-5,6,7,8-tetrahydrofolate binding site.

This sequence belongs to the thymidylate synthase family. Bacterial-type ThyA subfamily. As to quaternary structure, homodimer.

Its subcellular location is the cytoplasm. It catalyses the reaction dUMP + (6R)-5,10-methylene-5,6,7,8-tetrahydrofolate = 7,8-dihydrofolate + dTMP. The protein operates within pyrimidine metabolism; dTTP biosynthesis. In terms of biological role, catalyzes the reductive methylation of 2'-deoxyuridine-5'-monophosphate (dUMP) to 2'-deoxythymidine-5'-monophosphate (dTMP) while utilizing 5,10-methylenetetrahydrofolate (mTHF) as the methyl donor and reductant in the reaction, yielding dihydrofolate (DHF) as a by-product. This enzymatic reaction provides an intracellular de novo source of dTMP, an essential precursor for DNA biosynthesis. This Bartonella tribocorum (strain CIP 105476 / IBS 506) protein is Thymidylate synthase.